The following is a 64-amino-acid chain: Crotamine CRO3 (64 aa).

The first 22 residues, 1 to 22 (MILYLLFAFLFLAFLSEPGNAY), serve as a signal peptide directing secretion. Disulfide bonds link C25-C57, C32-C51, and C39-C58.

It belongs to the crotamine-myotoxin family. As to quaternary structure, monomer. As to expression, expressed by the venom gland.

Its subcellular location is the secreted. Functionally, cationic peptide that possesses multiple functions. It acts as a cell-penetrating peptide (CPP), and as a potent voltage-gated potassium channel (Kv) inhibitor. It exhibits antimicrobial activities, hind limb paralysis, and severe muscle necrosis by a non-enzymatic mechanism. The protein is Crotamine CRO3 (CRO3) of Crotalus durissus terrificus (South American rattlesnake).